A 39-amino-acid polypeptide reads, in one-letter code: Natriuretic peptide CnNP-a (39 aa).

Residues 1–8 constitute a propeptide that is removed on maturation; it reads SGSKTAKI. The cysteines at positions 12 and 28 are disulfide-linked.

The protein belongs to the natriuretic peptide family. In terms of tissue distribution, expressed by the venom gland.

The protein resides in the secreted. Snake venom natriuretic peptide that targets both NPR1 and NPR2. Exhibits hypotensive and vasodepressor activities. The chain is Natriuretic peptide CnNP-a from Cryptophis nigrescens (Eastern small-eyed snake).